Reading from the N-terminus, the 102-residue chain is Putative pterin-4-alpha-carbinolamine dehydratase (102 aa).

This sequence belongs to the pterin-4-alpha-carbinolamine dehydratase family.

It catalyses the reaction (4aS,6R)-4a-hydroxy-L-erythro-5,6,7,8-tetrahydrobiopterin = (6R)-L-erythro-6,7-dihydrobiopterin + H2O. In Burkholderia ambifaria (strain MC40-6), this protein is Putative pterin-4-alpha-carbinolamine dehydratase.